A 228-amino-acid chain; its full sequence is Urease accessory protein UreE (228 aa).

A disordered region spans residues 188 to 228; sequence PLDEPHGSGLHIHAIHSHGDGHSHDHDHSHSHGDHDHDHKH. Basic and acidic residues predominate over residues 204–228; that stretch reads SHGDGHSHDHDHSHSHGDHDHDHKH.

The protein belongs to the UreE family.

Its subcellular location is the cytoplasm. In terms of biological role, involved in urease metallocenter assembly. Binds nickel. Probably functions as a nickel donor during metallocenter assembly. The sequence is that of Urease accessory protein UreE from Yersinia kristensenii.